The chain runs to 218 residues: MSTLHKVKAYFGMAPMEDYDDEYYDDRAPSRGYARPRFDDDYGRYDGRDYDDARSDSRGDLRGEPADYPPPGYRGGYADEPRFRPREFDRAEMTRPRFGSWLRNSTRGALAMDPRRMAMMFEDGHPLSKITTLRPKDYSEARTIGERFRDGSPVIMDLVSMDNADAKRLVDFAAGLAFALRGSFDKVATKVFLLSPADVDVSPEERRRIAETGFYAYQ.

The interval 20 to 81 is disordered; the sequence is DDEYYDDRAP…GYRGGYADEP (62 aa). Basic and acidic residues predominate over residues 36-65; it reads PRFDDDYGRYDGRDYDDARSDSRGDLRGEP.

The protein belongs to the SepF family. As to quaternary structure, homodimer. Interacts with FtsZ.

Its subcellular location is the cytoplasm. Cell division protein that is part of the divisome complex and is recruited early to the Z-ring. Probably stimulates Z-ring formation, perhaps through the cross-linking of FtsZ protofilaments. Its function overlaps with FtsA. This Mycobacterium bovis (strain ATCC BAA-935 / AF2122/97) protein is Cell division protein SepF.